The following is a 227-amino-acid chain: Cytochrome c oxidase subunit 2 (227 aa).

Over 1 to 14 the chain is Mitochondrial intermembrane; sequence MAYPFQLGLQDATS. A helical transmembrane segment spans residues 15-45; the sequence is PIMEELANFHDHTLMIVFLISSLVLYIISSM. The Mitochondrial matrix portion of the chain corresponds to 46-59; that stretch reads LTTKLTHTSTMDAQ. The helical transmembrane segment at 60–87 threads the bilayer; sequence EVETIWTILPAVILILIALPSLRILYMM. Over 88–227 the chain is Mitochondrial intermembrane; that stretch reads DEINNPALTV…HFENWSASMI (140 aa). Residues H161, C196, E198, C200, H204, and M207 each coordinate Cu cation. E198 is a binding site for Mg(2+).

It belongs to the cytochrome c oxidase subunit 2 family. As to quaternary structure, component of the cytochrome c oxidase (complex IV, CIV), a multisubunit enzyme composed of 14 subunits. The complex is composed of a catalytic core of 3 subunits MT-CO1, MT-CO2 and MT-CO3, encoded in the mitochondrial DNA, and 11 supernumerary subunits COX4I, COX5A, COX5B, COX6A, COX6B, COX6C, COX7A, COX7B, COX7C, COX8 and NDUFA4, which are encoded in the nuclear genome. The complex exists as a monomer or a dimer and forms supercomplexes (SCs) in the inner mitochondrial membrane with NADH-ubiquinone oxidoreductase (complex I, CI) and ubiquinol-cytochrome c oxidoreductase (cytochrome b-c1 complex, complex III, CIII), resulting in different assemblies (supercomplex SCI(1)III(2)IV(1) and megacomplex MCI(2)III(2)IV(2)). Found in a complex with TMEM177, COA6, COX18, COX20, SCO1 and SCO2. Interacts with TMEM177 in a COX20-dependent manner. Interacts with COX20. Interacts with COX16. It depends on Cu cation as a cofactor.

It localises to the mitochondrion inner membrane. It carries out the reaction 4 Fe(II)-[cytochrome c] + O2 + 8 H(+)(in) = 4 Fe(III)-[cytochrome c] + 2 H2O + 4 H(+)(out). Its function is as follows. Component of the cytochrome c oxidase, the last enzyme in the mitochondrial electron transport chain which drives oxidative phosphorylation. The respiratory chain contains 3 multisubunit complexes succinate dehydrogenase (complex II, CII), ubiquinol-cytochrome c oxidoreductase (cytochrome b-c1 complex, complex III, CIII) and cytochrome c oxidase (complex IV, CIV), that cooperate to transfer electrons derived from NADH and succinate to molecular oxygen, creating an electrochemical gradient over the inner membrane that drives transmembrane transport and the ATP synthase. Cytochrome c oxidase is the component of the respiratory chain that catalyzes the reduction of oxygen to water. Electrons originating from reduced cytochrome c in the intermembrane space (IMS) are transferred via the dinuclear copper A center (CU(A)) of subunit 2 and heme A of subunit 1 to the active site in subunit 1, a binuclear center (BNC) formed by heme A3 and copper B (CU(B)). The BNC reduces molecular oxygen to 2 water molecules using 4 electrons from cytochrome c in the IMS and 4 protons from the mitochondrial matrix. The sequence is that of Cytochrome c oxidase subunit 2 (MT-CO2) from Malacomys longipes (Big-eared swamp rat).